A 446-amino-acid polypeptide reads, in one-letter code: 3-phosphoshikimate 1-carboxyvinyltransferase (446 aa).

Residues lysine 26, serine 27, and arginine 31 each coordinate 3-phosphoshikimate. Lysine 26 contacts phosphoenolpyruvate. Glycine 100 and arginine 128 together coordinate phosphoenolpyruvate. Serine 171, serine 172, glutamine 173, serine 200, glutamate 315, and histidine 344 together coordinate 3-phosphoshikimate. Glutamine 173 serves as a coordination point for phosphoenolpyruvate. Glutamate 315 (proton acceptor) is an active-site residue. The phosphoenolpyruvate site is built by arginine 348, arginine 389, and lysine 414.

This sequence belongs to the EPSP synthase family. In terms of assembly, monomer.

It localises to the cytoplasm. The enzyme catalyses 3-phosphoshikimate + phosphoenolpyruvate = 5-O-(1-carboxyvinyl)-3-phosphoshikimate + phosphate. It participates in metabolic intermediate biosynthesis; chorismate biosynthesis; chorismate from D-erythrose 4-phosphate and phosphoenolpyruvate: step 6/7. Its function is as follows. Catalyzes the transfer of the enolpyruvyl moiety of phosphoenolpyruvate (PEP) to the 5-hydroxyl of shikimate-3-phosphate (S3P) to produce enolpyruvyl shikimate-3-phosphate and inorganic phosphate. The sequence is that of 3-phosphoshikimate 1-carboxyvinyltransferase from Mycolicibacterium gilvum (strain PYR-GCK) (Mycobacterium gilvum (strain PYR-GCK)).